The chain runs to 428 residues: Adenylosuccinate synthetase (428 aa).

Residues 12–18 and 40–42 contribute to the GTP site; these read GDEGKGK and GHT. The active-site Proton acceptor is Asp-13. Asp-13 and Gly-40 together coordinate Mg(2+). IMP is bound by residues 13 to 16, 38 to 41, Thr-130, Arg-144, Gln-225, Thr-240, and Arg-304; these read DEGK and NAGH. Residue His-41 is the Proton donor of the active site. 300-306 lines the substrate pocket; it reads VTTGRAR. GTP contacts are provided by residues Arg-306, 332 to 334, and 414 to 416; these read KID and SVG.

This sequence belongs to the adenylosuccinate synthetase family. Homodimer. It depends on Mg(2+) as a cofactor.

It is found in the cytoplasm. The enzyme catalyses IMP + L-aspartate + GTP = N(6)-(1,2-dicarboxyethyl)-AMP + GDP + phosphate + 2 H(+). The protein operates within purine metabolism; AMP biosynthesis via de novo pathway; AMP from IMP: step 1/2. Its function is as follows. Plays an important role in the de novo pathway of purine nucleotide biosynthesis. Catalyzes the first committed step in the biosynthesis of AMP from IMP. The protein is Adenylosuccinate synthetase of Clostridium acetobutylicum (strain ATCC 824 / DSM 792 / JCM 1419 / IAM 19013 / LMG 5710 / NBRC 13948 / NRRL B-527 / VKM B-1787 / 2291 / W).